The following is a 158-amino-acid chain: SsrA-binding protein (158 aa).

A disordered region spans residues 135 to 158; it reads DKRKTLKDRDWERDKQRGFKKDLD. Positions 141 to 158 are enriched in basic and acidic residues; the sequence is KDRDWERDKQRGFKKDLD.

Belongs to the SmpB family.

It localises to the cytoplasm. In terms of biological role, required for rescue of stalled ribosomes mediated by trans-translation. Binds to transfer-messenger RNA (tmRNA), required for stable association of tmRNA with ribosomes. tmRNA and SmpB together mimic tRNA shape, replacing the anticodon stem-loop with SmpB. tmRNA is encoded by the ssrA gene; the 2 termini fold to resemble tRNA(Ala) and it encodes a 'tag peptide', a short internal open reading frame. During trans-translation Ala-aminoacylated tmRNA acts like a tRNA, entering the A-site of stalled ribosomes, displacing the stalled mRNA. The ribosome then switches to translate the ORF on the tmRNA; the nascent peptide is terminated with the 'tag peptide' encoded by the tmRNA and targeted for degradation. The ribosome is freed to recommence translation, which seems to be the essential function of trans-translation. The sequence is that of SsrA-binding protein from Psychrobacter cryohalolentis (strain ATCC BAA-1226 / DSM 17306 / VKM B-2378 / K5).